Here is a 1499-residue protein sequence, read N- to C-terminus: Tyrosine-protein phosphatase non-receptor type 23 (1499 aa).

The region spanning 1–219 (LNVNLMLGQA…AKIEDKNEVL (219 aa)) is the BRO1 domain. 2 TPR repeats span residues 75 to 108 (AVAHLHMGKQAEEQQKFGERVAYFQSALDKLNEA) and 199 to 232 (EEKAKLLREMLAKIEDKNEVLDQFMDSMQLDPDT). Coiled coils occupy residues 278–305 (EASLKDIRDLLEEDELQEQKLQETLGQA), 377–464 (KAVL…NVQY), and 506–537 (YADLESKVAALLERAQSLCRAQEAARQQLLDR). 2 disordered regions span residues 536–583 (DREL…MMAG) and 718–1006 (HMAL…LLQP). The segment at 598–993 (HFSPGPFPGS…SSSPESQHGG (396 aa)) is his. Residues 724-752 (GPAPAPPQPCFPVPQPVPQSVPQPQPLPT) are compositionally biased toward pro residues. Over residues 754 to 763 (YTYSIGTKQH) the composition is skewed to polar residues. Arginine 785 carries the post-translational modification Omega-N-methylarginine. Pro residues-rich tracts occupy residues 785-827 (RIGP…PQPQ), 856-866 (LTPPPPYPFTP), 900-909 (FPSPGPPHPH), and 934-972 (GPPPANQPAPSPHLVPSPAPSPGPGPVPSRPPTAEPPPC). Tandem repeats lie at residues 788–789 (PQ), 790–791 (PP), 792–793 (PQ), 794–795 (LQ), 796–797 (PQ), 798–799 (PQ), 800–801 (PQ), 802–803 (PQ), 804–805 (PQ), 806–807 (PP), 808–809 (PQ), 810–811 (PQ), 812–813 (PQ), 814–815 (PQ), 816–817 (PQ), 818–819 (PQ), 820–821 (PQ), 822–823 (PQ), 824–825 (PQ), and 826–827 (PQ). Residues 788–827 (PQPPPQLQPQPQPQPQPQPPPQPQPQPQPQPQPQPQPQPQ) are 20 X 2 AA approximate tandem repeats of P-Q. Serine 985 and serine 986 each carry phosphoserine. Position 994 is a phosphothreonine (threonine 994). In terms of domain architecture, Tyrosine-protein phosphatase spans 1055–1315 (DAVWRELQEA…KFCHEALVRH (261 aa)). Cysteine 1255 acts as the Phosphocysteine intermediate in catalysis. Disordered regions lie at residues 1322-1351 (RHGVPPPGKPVASMSVSQKSHLPQDSQDLV) and 1381-1499 (ASLP…LNKT). Residues 1335–1348 (MSVSQKSHLPQDSQ) are compositionally biased toward polar residues. Pro residues predominate over residues 1390 to 1419 (PGLPPASLPEPTPAPPSSPPPPSSPLPEPP). The segment covering 1427–1450 (VPEAPSLGPPSSSLELLASLTPEA) has biased composition (low complexity). Residues 1464 to 1473 (SKQNFLQAHN) show a composition bias toward polar residues. An Omega-N-methylarginine modification is found at arginine 1478. Residues 1482–1499 (PTDDPLSLLDPLWTLNKT) are compositionally biased toward low complexity.

Belongs to the protein-tyrosine phosphatase family. Non-receptor class subfamily. Interacts with GRAP2 and GRB2. Interacts with UBAP1 and CHMP4B. In terms of tissue distribution, ubiquitously expressed, with highest levels in brain, testis and kidney, and lowest levels in skeletal muscle.

The protein localises to the nucleus. It is found in the cytoplasm. Its subcellular location is the cytoplasmic vesicle. The protein resides in the endosome. It localises to the cytoskeleton. The protein localises to the cilium basal body. It catalyses the reaction O-phospho-L-tyrosyl-[protein] + H2O = L-tyrosyl-[protein] + phosphate. Its function is as follows. Plays a role in sorting of endocytic ubiquitinated cargos into multivesicular bodies (MVBs) via its interaction with the ESCRT-I complex (endosomal sorting complex required for transport I), and possibly also other ESCRT complexes. May act as a negative regulator of Ras-mediated mitogenic activity. Plays a role in ciliogenesis. The sequence is that of Tyrosine-protein phosphatase non-receptor type 23 (Ptpn23) from Rattus norvegicus (Rat).